The chain runs to 283 residues: ATP phosphoribosyltransferase (283 aa).

It belongs to the ATP phosphoribosyltransferase family. Long subfamily. The cofactor is Mg(2+).

The protein localises to the cytoplasm. It catalyses the reaction 1-(5-phospho-beta-D-ribosyl)-ATP + diphosphate = 5-phospho-alpha-D-ribose 1-diphosphate + ATP. It participates in amino-acid biosynthesis; L-histidine biosynthesis; L-histidine from 5-phospho-alpha-D-ribose 1-diphosphate: step 1/9. With respect to regulation, feedback inhibited by histidine. In terms of biological role, catalyzes the condensation of ATP and 5-phosphoribose 1-diphosphate to form N'-(5'-phosphoribosyl)-ATP (PR-ATP). Has a crucial role in the pathway because the rate of histidine biosynthesis seems to be controlled primarily by regulation of HisG enzymatic activity. The chain is ATP phosphoribosyltransferase from Nocardia farcinica (strain IFM 10152).